The primary structure comprises 417 residues: Phosphoglycerate kinase 2 (417 aa).

The (2R)-3-phosphoglycerate site is built by Val23, Asp24, Phe25, Asn26, Asn38, Arg39, Ser62, His63, Gly65, Arg66, Leu121, Arg122, His168, and Arg169. Gly212 lines the ADP pocket. Gly212 is a CDP binding site. Residues Ala213 and Lys214 each coordinate AMP. Residue Ala213 participates in ATP binding. Residue Ala213 participates in Mg(2+) binding. CDP is bound at residue Asp217. Asp217 is a Mg(2+) binding site. AMP is bound at residue Lys218. Residue Lys218 coordinates ATP. Gly236 serves as a coordination point for ADP. Residue Gly236 coordinates CDP. Residues Gly237 and Gly312 each contribute to the AMP site. ATP contacts are provided by Gly237 and Gly312. CDP is bound by residues Gly337 and Phe342. ADP is bound at residue Phe342. Glu343 contributes to the AMP binding site. The ATP site is built by Glu343, Asp374, and Thr375. Asp374 provides a ligand contact to Mg(2+).

It belongs to the phosphoglycerate kinase family. As to quaternary structure, monomer. Mg(2+) serves as cofactor.

Its subcellular location is the cytoplasm. It is found in the mitochondrion. It carries out the reaction (2R)-3-phosphoglycerate + ATP = (2R)-3-phospho-glyceroyl phosphate + ADP. The protein operates within carbohydrate degradation; glycolysis; pyruvate from D-glyceraldehyde 3-phosphate: step 2/5. In terms of biological role, catalyzes one of the two ATP producing reactions in the glycolytic pathway via the reversible conversion of 1,3-diphosphoglycerate to 3-phosphoglycerate. Both L- and D- forms of purine and pyrimidine nucleotides can be used as substrates, but the activity is much lower on pyrimidines. Negatively regulates the biosynthesis of acetyl-CoA from pyruvate in the mitochondrion. The protein is Phosphoglycerate kinase 2 (PGK2) of Rhizopus niveus.